The primary structure comprises 176 residues: Probable superoxide oxidase CybB (176 aa).

Helical transmembrane passes span 7–27, 44–64, 85–105, and 137–157; these read CLQIGIHWLVLLLVIIAWSSI, IHFSCGIAILVLMMTRILIQL, VGHWVIYLLFIALPIIGIAIL, and HLLLANMSYFVIGLHALAALL. Heme b is bound by residues His-13 and His-45. Residues His-137 and His-151 each contribute to the heme b site.

This sequence belongs to the cytochrome b561 family. It depends on heme b as a cofactor.

It localises to the cell inner membrane. It catalyses the reaction a ubiquinol + 2 O2 = 2 superoxide + a ubiquinone + 2 H(+). Its function is as follows. B-type di-heme cytochrome. Catalyzes the oxidation of superoxide to molecular oxygen and transfers the extracted electrons to ubiquinone through the two hemes. The chain is Probable superoxide oxidase CybB (cybB) from Yersinia pestis.